We begin with the raw amino-acid sequence, 1368 residues long: DNA-directed RNA polymerase subunit beta (1368 aa).

Belongs to the RNA polymerase beta chain family. As to quaternary structure, the RNAP catalytic core consists of 2 alpha, 1 beta, 1 beta' and 1 omega subunit. When a sigma factor is associated with the core the holoenzyme is formed, which can initiate transcription.

The catalysed reaction is RNA(n) + a ribonucleoside 5'-triphosphate = RNA(n+1) + diphosphate. DNA-dependent RNA polymerase catalyzes the transcription of DNA into RNA using the four ribonucleoside triphosphates as substrates. The polypeptide is DNA-directed RNA polymerase subunit beta (Ralstonia pickettii (strain 12J)).